Reading from the N-terminus, the 31-residue chain is Photosystem II reaction center protein M (31 aa).

A helical transmembrane segment spans residues 5 to 25 (ILAFIATALLILVPTAFLLII).

Belongs to the PsbM family. As to quaternary structure, PSII is composed of 1 copy each of membrane proteins PsbA, PsbB, PsbC, PsbD, PsbE, PsbF, PsbH, PsbI, PsbJ, PsbK, PsbL, PsbM, PsbT, PsbX, PsbY, PsbZ, Psb30/Ycf12, at least 3 peripheral proteins of the oxygen-evolving complex and a large number of cofactors. It forms dimeric complexes.

It localises to the plastid membrane. In terms of biological role, one of the components of the core complex of photosystem II (PSII). PSII is a light-driven water:plastoquinone oxidoreductase that uses light energy to abstract electrons from H(2)O, generating O(2) and a proton gradient subsequently used for ATP formation. It consists of a core antenna complex that captures photons, and an electron transfer chain that converts photonic excitation into a charge separation. This subunit is found at the monomer-monomer interface. This chain is Photosystem II reaction center protein M, found in Cuscuta exaltata (Tall dodder).